The sequence spans 263 residues: Single-stranded DNA-binding protein WHY1, chloroplastic (263 aa).

Residues 1–47 (MSQLLSTPLMAVNSNPRFLSSSSVLVTGGFAVKRHGFALKPTTKTVK) constitute a chloroplast transit peptide. The segment at 89 to 94 (KGKAAL) is required for ssDNA binding. The Nuclear localization signal signature appears at 167 to 180 (KGKSDEGKVRKVLK).

It belongs to the Whirly family. In terms of assembly, homotetramer.

Its subcellular location is the plastid. The protein localises to the chloroplast. It localises to the nucleus. In terms of biological role, single-stranded DNA-binding protein that functions in both chloroplasts and nucleus. In chloroplasts, maintains plastid genome stability by preventing break-induced and short homology-dependent illegitimate recombinations. In nucleus, modulates telomere length homeostasis by inhibiting the action of the telomerase at the extreme termini of chromosomes. Is recruited to a distal element upstream of the kinesin KP1 to mediate the transcriptional repression of KP1. Is required for full salicylic acid-dependent plant disease resistance responses. Can bind double-stranded DNA in vivo. The chain is Single-stranded DNA-binding protein WHY1, chloroplastic (WHY1) from Arabidopsis thaliana (Mouse-ear cress).